Reading from the N-terminus, the 504-residue chain is Amidophosphoribosyltransferase (504 aa).

Cysteine 2 (nucleophile) is an active-site residue. The Glutamine amidotransferase type-2 domain maps to 2 to 235 (CGIVGIVSQS…PGEAIYVTFE (234 aa)). 3 residues coordinate Mg(2+): threonine 305, aspartate 367, and aspartate 368.

It in the C-terminal section; belongs to the purine/pyrimidine phosphoribosyltransferase family. Requires Mg(2+) as cofactor.

It catalyses the reaction 5-phospho-beta-D-ribosylamine + L-glutamate + diphosphate = 5-phospho-alpha-D-ribose 1-diphosphate + L-glutamine + H2O. The protein operates within purine metabolism; IMP biosynthesis via de novo pathway; N(1)-(5-phospho-D-ribosyl)glycinamide from 5-phospho-alpha-D-ribose 1-diphosphate: step 1/2. Functionally, catalyzes the formation of phosphoribosylamine from phosphoribosylpyrophosphate (PRPP) and glutamine. This Pasteurella multocida (strain Pm70) protein is Amidophosphoribosyltransferase.